The chain runs to 808 residues: Potassium transporter 5 (808 aa).

Over 1–65 (MAEEVGETRG…NQVNWKKTLS (65 aa)) the chain is Cytoplasmic. The chain crosses the membrane as a helical span at residues 66–86 (LTFQSIGVVYGDIGTSPLYVY). Residues 87–102 (ESTFPDKIGSKEDILG) are Extracellular-facing. The helical transmembrane segment at 103–123 (VLSLIIYTLVLLPMLKYVFIV) threads the bilayer. The Cytoplasmic segment spans residues 124 to 189 (LRANDNGDGG…EKMENSKNIK (66 aa)). A helical transmembrane segment spans residues 190–210 (ILLFLVTILGTSMVIGDGVLT). Topologically, residues 211 to 221 (PCISVLSAVSG) are extracellular. The helical transmembrane segment at 222–242 (IGSLGQDAVVGISIAILIVLF) threads the bilayer. At 243 to 251 (CAQRLGTDK) the chain is on the cytoplasmic side. The helical transmembrane segment at 252–272 (VGFSFAPIILLWFSFIGGIGL) threads the bilayer. At 273-302 (YNLFKYDVSVLRAFNPKYMFDYFKRNGKQG) the chain is on the extracellular side. Residues 303–323 (WISLGGVVLAVTGTEAMFADL) traverse the membrane as a helical segment. Topologically, residues 324–327 (GHFN) are cytoplasmic. The chain crosses the membrane as a helical span at residues 328-348 (VQAIQISFSGIVFPALLCAYA). Over 349 to 379 (GQAAYLTKFPDDVSKTFYKSIPDPLYWPTFV) the chain is Extracellular. A helical membrane pass occupies residues 380–400 (VAVAAAIIASQAMISGAFAII). At 401–424 (SQSLSLGCFPRVKVIHTSAKYEGQ) the chain is on the cytoplasmic side. A helical transmembrane segment spans residues 425–445 (VYIPEVNYILMIACIMVCLGF). At 446 to 456 (KTTEKIGNAYG) the chain is on the extracellular side. The helical transmembrane segment at 457-477 (IAVVAVMVITTCMVTIIMLVV) threads the bilayer. The Cytoplasmic portion of the chain corresponds to 478–482 (WRTKM). Residues 483 to 503 (IWIAFFFFGFICIEAVYLSSV) traverse the membrane as a helical segment. Residues 504-510 (LYKFKDG) are Extracellular-facing. The chain crosses the membrane as a helical span at residues 511–531 (GFLPLAFSFFLMIIMGIWHYI). Topologically, residues 532-808 (HKERYMYELK…LLRVGMTYEI (277 aa)) are cytoplasmic. The segment at 699-722 (LQQPNPSRVSSGSIHSNSGIKSTK) is disordered.

It belongs to the HAK/KUP transporter (TC 2.A.72.3) family. Expressed in the roots.

The protein resides in the cell membrane. The enzyme catalyses K(+)(in) = K(+)(out). In terms of biological role, high-affinity potassium transporter that functions under low potassium conditions. Involved in the positive regulation of salt tolerance under salt stress. In Manihot esculenta (Cassava), this protein is Potassium transporter 5.